Here is a 244-residue protein sequence, read N- to C-terminus: uncharacterized protein (244 aa).

The next 4 helical transmembrane spans lie at 20-42 (TITAIAPIVMTFEPFFIFPVVLI), 49-67 (FVYILLPITAALILRATKV), 82-101 (TPSIAVFAVLLVATTIASVF), and 108-125 (AFLVAIVVISILHAATPI).

The protein localises to the cell membrane. This is an uncharacterized protein from Archaeoglobus fulgidus (strain ATCC 49558 / DSM 4304 / JCM 9628 / NBRC 100126 / VC-16).